The sequence spans 501 residues: Acetylcholine receptor subunit beta (501 aa).

The first 23 residues, 1-23 (MTPGALLMLLGALGAPLAPGVRG), serve as a signal peptide directing secretion. Over 24–244 (SEAEGRLREK…VIFYLIIRRK (221 aa)) the chain is Extracellular. Cysteine 151 and cysteine 165 form a disulfide bridge. Asparagine 164 is a glycosylation site (N-linked (GlcNAc...) asparagine). 3 helical membrane-spanning segments follow: residues 245-269 (PLFYLVNVIAPCILITLLAIFVFYL), 277-295 (MGLSIFALLTLTVFLLLLA), and 311-332 (YLMFTMVLVTFSVILSVVVLNL). Over 333–469 (HHRSPHTHQM…WQFVAMVVDR (137 aa)) the chain is Cytoplasmic. Tyrosine 390 carries the phosphotyrosine; by Tyr-kinases modification. The helical transmembrane segment at 470–488 (LFLWTFIIFTSVGTLVIFL) threads the bilayer.

It belongs to the ligand-gated ion channel (TC 1.A.9) family. Acetylcholine receptor (TC 1.A.9.1) subfamily. Beta-1/CHRNB1 sub-subfamily. Pentamer of two alpha chains, and one each of the beta, delta, and gamma (in immature muscle) or epsilon (in mature muscle) chains. The muscle heteropentamer composed of alpha-1, beta-1, delta, epsilon subunits interacts with the alpha-conotoxin ImII.

It is found in the postsynaptic cell membrane. The protein localises to the cell membrane. It catalyses the reaction K(+)(in) = K(+)(out). The enzyme catalyses Na(+)(in) = Na(+)(out). After binding acetylcholine, the AChR responds by an extensive change in conformation that affects all subunits and leads to opening of an ion-conducting channel across the plasma membrane. The chain is Acetylcholine receptor subunit beta from Homo sapiens (Human).